A 244-amino-acid chain; its full sequence is Complement C1q subcomponent subunit A (244 aa).

The N-terminal stretch at 1–22 (MEAPRGWLVISVLAISLASSVT) is a signal peptide. The interval 28–94 (APDGTHGSAG…PGPSGPMGPA (67 aa)) is disordered. In terms of domain architecture, Collagen-like spans 31–109 (GTHGSAGIPG…KGTKGSPGNI (79 aa)). A 4-hydroxyproline mark is found at Pro39 and Pro45. Lys48 bears the 5-hydroxylysine mark. Residue Lys48 is glycosylated (O-linked (Gal...) hydroxylysine). 4-hydroxyproline is present on residues Pro54 and Pro57. At Lys67 the chain carries 5-hydroxylysine. Lys67 is a glycosylation site (O-linked (Gal...) hydroxylysine). Residues Pro73, Pro79, and Pro85 each carry the 4-hydroxyproline modification. The segment covering 79–94 (PGRMGYPGPSGPMGPA) has biased composition (low complexity). Lys100 bears the 5-hydroxylysine mark. Lys100 is a glycosylation site (O-linked (Gal...) hydroxylysine). In terms of domain architecture, C1q spans 110-244 (KDQPRPAFSA…FSGFLIFPSA (135 aa)). A glycan (N-linked (GlcNAc...) asparagine) is linked at Asn146. An intrachain disulfide couples Cys172 to Cys189. Position 198 (Gln198) interacts with Ca(2+).

In terms of assembly, core component of the complement C1 complex, a calcium-dependent complex composed of 1 molecule of the C1Q subcomplex, 2 molecules of C1R and 2 molecules of C1S. The C1Q subcomplex is composed 18 subunits: 3 chains of C1QA, C1QB, and C1QC trimerize to form 6 collagen-like triple helices connected to six globular ligand-recognition modules (C1q domain). Interacts with CR1 (via Sushi 24 and Sushi 25 domains). Interacts (via C-terminus) with CD33; this interaction activates CD33 inhibitory motifs. In terms of processing, O-linked glycans are assumed to be the Glc-Gal disaccharides typically found as secondary modifications of hydroxylated lysines in collagen-like domains.

It is found in the secreted. Its subcellular location is the cell surface. The C1Q subcomplex is inhibited by sulfated molecules, such as triterpenoid sulfates, heparan sulfate, or chondroitin sulfates. Core component of the complement C1 complex, a multiprotein complex that initiates the classical pathway of the complement system, a cascade of proteins that leads to phagocytosis and breakdown of pathogens and signaling that strengthens the adaptive immune system. The classical complement pathway is initiated by the C1Q subcomplex of the C1 complex, which specifically binds IgG or IgM immunoglobulins complexed with antigens, forming antigen-antibody complexes on the surface of pathogens: C1QA, together with C1QB and C1QC, specifically recognizes and binds the Fc regions of IgG or IgM via its C1q domain. Immunoglobulin-binding activates the proenzyme C1R, which cleaves C1S, initiating the proteolytic cascade of the complement system. The C1Q subcomplex is activated by a hexamer of IgG complexed with antigens, while it is activated by a pentameric IgM. The C1Q subcomplex also recognizes and binds phosphatidylserine exposed on the surface of cells undergoing programmed cell death, possibly promoting activation of the complement system. The protein is Complement C1q subcomponent subunit A (C1QA) of Bos taurus (Bovine).